The following is a 488-amino-acid chain: Acetyl-CoA decarbonylase/synthase complex subunit gamma (488 aa).

Residues Met-1–Glu-61 form the 4Fe-4S domain. Cys-19, Cys-22, Cys-27, and Cys-44 together coordinate [4Fe-4S] cluster.

As to quaternary structure, heterodimer of delta and gamma chains. The ACDS complex is made up of alpha, epsilon, beta, gamma and delta chains with a probable stoichiometry of (alpha(2)epsilon(2))(4)-beta(8)-(gamma(1)delta(1))(8). Corrinoid is required as a cofactor. The cofactor is [4Fe-4S] cluster.

It carries out the reaction 5,6,7,8-tetrahydrosarcinapterin + methyl-Co(III)-[corrinoid Fe-S protein] = 5-methyltetrahydrosarcinapterin + Co(I)-[corrinoid Fe-S protein] + H(+). Functionally, part of a complex that catalyzes the reversible cleavage of acetyl-CoA, allowing autotrophic growth from CO(2). The sequence is that of Acetyl-CoA decarbonylase/synthase complex subunit gamma from Methanocaldococcus jannaschii (strain ATCC 43067 / DSM 2661 / JAL-1 / JCM 10045 / NBRC 100440) (Methanococcus jannaschii).